The following is a 1538-amino-acid chain: Myosin-9 (1538 aa).

The region spanning 16–65 (SIGSHVWFEDPEVAWIDGEVEKINGQEVVIQATTGKKVTAKLSKIYPKDV) is the Myosin N-terminal SH3-like domain. One can recognise a Myosin motor domain in the interval 70–740 (GGVDDMTKLS…QMAELDARRA (671 aa)). Residues 164–171 (GESGAGKT) and 217–225 (NNNSSRFGK) contribute to the ATP site. Actin-binding stretches follow at residues 503–537 (LIEK…YQTF), 539–562 (THKR…AGEV), 597–621 (FPPL…KLQL), and 621–643 (LQQL…KPNN). IQ domains follow at residues 743-772 (LSSA…ATIS), 766-795 (LRKA…EAAA), 791-820 (REAA…ASLV), 814-843 (LHVA…TKAA), 839-868 (QTKA…GVVL), and 862-891 (LKNG…AARE). Residues 892-1064 (TGALKEAKDM…VLRQQAVSMA (173 aa)) are a coiled coil. Residues 1017-1032 (SLEDKKKKLEETEKKG) show a composition bias toward basic and acidic residues. 2 disordered regions span residues 1017-1041 (SLED…SLTR) and 1098-1121 (SHSI…NEKQ). In terms of domain architecture, Dilute spans 1168-1481 (DRIIQTIGHA…IANMRVLMTE (314 aa)).

Belongs to the TRAFAC class myosin-kinesin ATPase superfamily. Myosin family. Plant myosin class XI subfamily. Homodimer.

Functionally, myosin heavy chain that is required for the cell cycle-regulated transport of various organelles and proteins for their segregation. Functions by binding with its tail domain to receptor proteins on organelles and exerting force with its N-terminal motor domain against actin filaments, thereby transporting its cargo along polarized actin cables. Involved in trafficking of Golgi stacks and mitochondria. The sequence is that of Myosin-9 (XI-C) from Arabidopsis thaliana (Mouse-ear cress).